A 150-amino-acid polypeptide reads, in one-letter code: Large ribosomal subunit protein bL9 (150 aa).

The protein belongs to the bacterial ribosomal protein bL9 family.

Functionally, binds to the 23S rRNA. This is Large ribosomal subunit protein bL9 from Photorhabdus laumondii subsp. laumondii (strain DSM 15139 / CIP 105565 / TT01) (Photorhabdus luminescens subsp. laumondii).